The sequence spans 855 residues: Circadian locomoter output cycles protein kaput (855 aa).

The short motif at 32–47 is the Nuclear localization signal element; sequence DKAKRVSRNKSEKKRR. The 51-residue stretch at 34 to 84 folds into the bHLH domain; that stretch reads AKRVSRNKSEKKRRDQFNVLIKELGSMLPGNARKMDKSTVLQKSIDFLRKH. Phosphoserine is present on residues Ser-38 and Ser-42. Lys-67 is covalently cross-linked (Glycyl lysine isopeptide (Lys-Gly) (interchain with G-Cter in SUMO1)). PAS domains lie at 107-177 and 262-332; these read NEEF…LLES and FIKE…MQYG. Residues 336–379 enclose the PAC domain; that stretch reads SCYYRFLTKGQQWIWLQTHYYITYHQWNSRPEFIVCTHTVVSYA. Residues 371-854 form an interaction with NR3C1 region; that stretch reads CTHTVVSYAE…SLTDPSKVQP (484 aa). 2 disordered regions span residues 392 to 411 and 420 to 497; these read EESLPETAADKSQDSGSDNR and ALER…LTQP. Position 408 is a phosphoserine (Ser-408). Ser-427 is modified (phosphoserine; by GSK3-beta). Phosphoserine is present on Ser-431. Over residues 447–463 the composition is skewed to polar residues; the sequence is DPSSTPTKIPTDTSTPP. An interaction with SIRT1 region spans residues 450-570; it reads STPTKIPTDT…QGLQMFLQQS (121 aa). Phosphothreonine; by CDK5 is present on residues Thr-451 and Thr-461. Over residues 478-493 the composition is skewed to low complexity; that stretch reads SSFSSQSINSQSVGPS. Residues 514 to 564 form an implicated in the circadian rhythmicity region; it reads FQFSAQLGAMQHLKDQLEQRTRMIEANIHRQQEELRKIQEQLQMVHGQGLQ. 3 disordered regions span residues 613-650, 752-791, and 814-855; these read TGQHMIQQQTLQSTSTQQSQQSVMSGHSQQTSLPSQTP, QQQQQQQQPPQQQQQQQQSSQEQQLPSVQQPAQAQLGQPP, and AFPL…VQPQ. Low complexity predominate over residues 619–650; sequence QQQTLQSTSTQQSQQSVMSGHSQQTSLPSQTP. The span at 818–837 shows a compositional bias: low complexity; sequence QQSTFPPSHHQQHQPQQQQQ. Positions 846-855 are enriched in polar residues; that stretch reads LTDPSKVQPQ. Residue Lys-851 forms a Glycyl lysine isopeptide (Lys-Gly) (interchain with G-Cter in SUMO1) linkage.

In terms of assembly, component of the circadian clock oscillator which includes the CRY proteins, CLOCK or NPAS2, BMAL1 or BMAL2, CSNK1D and/or CSNK1E, TIMELESS and the PER proteins. Forms a heterodimer with BMAL1. The CLOCK-BMAL1 heterodimer is required for E-box-dependent transactivation, for CLOCK nuclear translocation and degradation, and for phosphorylation of both CLOCK and BMAL1. Interacts with NR3C1 in a ligand-dependent fashion. Interacts with ESR1 and estrogen stimulates this interaction. Interacts with the complex p35/CDK5. Interacts with RELA/p65. Interacts with KAT2B, CREBBP and EP300. Interacts with ID1 and ID3. Interacts with ID2. Interacts with MTA1. Interacts with OGA. Interacts with SIRT1. Interacts with CIPC. Interacts with EZH2. Interacts with EIF4E, PIWIL1 and DDX4. Interacts with PER1, PER2, CRY1 and CRY2 and this interaction requires a translocation to the nucleus. Interaction of the CLOCK-BMAL1 heterodimer with PER or CRY inhibits transcription activation. Interaction of the CLOCK-BMAL1 with CRY1 is independent of DNA but with PER2 is off DNA. The CLOCK-BMAL1 heterodimer interacts with GSK3B. Interacts with KDM5A. Interacts with KMT2A; in a circadian manner. Interacts with MYBBP1A. Interacts with THRAP3. Interacts with MED1; this interaction requires the presence of THRAP3. Interacts with NCOA2. The CLOCK-BMAL1 heterodimer interacts with PASD1. Interacts with NDUFA9. Interacts with IMPDH2; in a circadian manner. Interacts with ASS1; in a circadian manner. Interacts with PIWIL2 (via PIWI domain). Interacts with HNF4A. In terms of processing, ubiquitinated, leading to its proteasomal degradation. Post-translationally, O-glycosylated; contains O-GlcNAc. O-glycosylation by OGT prevents protein degradation by inhibiting ubiquitination. It also stabilizes the CLOCK-BMAL1 heterodimer thereby increasing CLOCK-BMAL1-mediated transcriptional activation of PER1/2/3 and CRY1/2. Phosphorylation is dependent on the CLOCK-BMAL1 heterodimer formation. Phosphorylation enhances the transcriptional activity, alters the subcellular localization and decreases the stability of the heterodimer by promoting its degradation. Phosphorylation shows circadian variations in the liver: the hyperphosphorylated form peaks at midnight (CT18), while the hypophosphorylated form is abundant throughout the day. May be phosphorylated by CSNK1D and CKSN1E. In terms of processing, sumoylation enhances its transcriptional activity and interaction with ESR1, resulting in up-regulation of ESR1 activity. Estrogen stimulates sumoylation. Desumoylation by SENP1 negatively regulates its transcriptional activity. Post-translationally, undergoes lysosome-mediated degradation in a time-dependent manner in the liver. In terms of tissue distribution, expressed equally in brain, eye, testes, ovaries, liver, heart, lung, kidney. In the brain, expression is abundant in the suprachiasmatic nuclei (SCN), in the pyriform cortex, and in the hippocampus. Low expression throughout the rest of the brain. Expression does not appear to undergo circadian oscillations.

The protein resides in the nucleus. The protein localises to the cytoplasm. It localises to the cytosol. It catalyses the reaction L-lysyl-[protein] + acetyl-CoA = N(6)-acetyl-L-lysyl-[protein] + CoA + H(+). Transcriptional activator which forms a core component of the circadian clock. The circadian clock, an internal time-keeping system, regulates various physiological processes through the generation of approximately 24 hour circadian rhythms in gene expression, which are translated into rhythms in metabolism and behavior. It is derived from the Latin roots 'circa' (about) and 'diem' (day) and acts as an important regulator of a wide array of physiological functions including metabolism, sleep, body temperature, blood pressure, endocrine, immune, cardiovascular, and renal function. Consists of two major components: the central clock, residing in the suprachiasmatic nucleus (SCN) of the brain, and the peripheral clocks that are present in nearly every tissue and organ system. Both the central and peripheral clocks can be reset by environmental cues, also known as Zeitgebers (German for 'timegivers'). The predominant Zeitgeber for the central clock is light, which is sensed by retina and signals directly to the SCN. The central clock entrains the peripheral clocks through neuronal and hormonal signals, body temperature and feeding-related cues, aligning all clocks with the external light/dark cycle. Circadian rhythms allow an organism to achieve temporal homeostasis with its environment at the molecular level by regulating gene expression to create a peak of protein expression once every 24 hours to control when a particular physiological process is most active with respect to the solar day. Transcription and translation of core clock components (CLOCK, NPAS2, BMAL1, BMAL2, PER1, PER2, PER3, CRY1 and CRY2) plays a critical role in rhythm generation, whereas delays imposed by post-translational modifications (PTMs) are important for determining the period (tau) of the rhythms (tau refers to the period of a rhythm and is the length, in time, of one complete cycle). A diurnal rhythm is synchronized with the day/night cycle, while the ultradian and infradian rhythms have a period shorter and longer than 24 hours, respectively. Disruptions in the circadian rhythms contribute to the pathology of cardiovascular diseases, cancer, metabolic syndromes and aging. A transcription/translation feedback loop (TTFL) forms the core of the molecular circadian clock mechanism. Transcription factors, CLOCK or NPAS2 and BMAL1 or BMAL2, form the positive limb of the feedback loop, act in the form of a heterodimer and activate the transcription of core clock genes and clock-controlled genes (involved in key metabolic processes), harboring E-box elements (5'-CACGTG-3') within their promoters. The core clock genes: PER1/2/3 and CRY1/2 which are transcriptional repressors form the negative limb of the feedback loop and interact with the CLOCK|NPAS2-BMAL1|BMAL2 heterodimer inhibiting its activity and thereby negatively regulating their own expression. This heterodimer also activates nuclear receptors NR1D1/2 and RORA/B/G, which form a second feedback loop and which activate and repress BMAL1 transcription, respectively. Regulates the circadian expression of ICAM1, VCAM1, CCL2, THPO and MPL and also acts as an enhancer of the transactivation potential of NF-kappaB. Plays an important role in the homeostatic regulation of sleep. The CLOCK-BMAL1 heterodimer regulates the circadian expression of SERPINE1/PAI1, VWF, B3, CCRN4L/NOC, NAMPT, DBP, MYOD1, PPARGC1A, PPARGC1B, SIRT1, GYS2, F7, NGFR, GNRHR, BHLHE40/DEC1, ATF4, MTA1, KLF10 and also genes implicated in glucose and lipid metabolism. Promotes rhythmic chromatin opening, regulating the DNA accessibility of other transcription factors. May play a role in spermatogenesis; contributes to the chromatoid body assembly and physiology. The CLOCK-BMAL2 heterodimer activates the transcription of SERPINE1/PAI1 and BHLHE40/DEC1. The preferred binding motif for the CLOCK-BMAL1 heterodimer is 5'-CACGTGA-3', which contains a flanking adenine nucleotide at the 3-prime end of the canonical 6-nucleotide E-box sequence. CLOCK specifically binds to the half-site 5'-CAC-3', while BMAL1 binds to the half-site 5'-GTGA-3'. The CLOCK-BMAL1 heterodimer also recognizes the non-canonical E-box motifs 5'-AACGTGA-3' and 5'-CATGTGA-3'. CLOCK has an intrinsic acetyltransferase activity, which enables circadian chromatin remodeling by acetylating histones and nonhistone proteins, including its own partner BMAL1. Represses glucocorticoid receptor NR3C1/GR-induced transcriptional activity by reducing the association of NR3C1/GR to glucocorticoid response elements (GREs) via the acetylation of multiple lysine residues located in its hinge region. The acetyltransferase activity of CLOCK is as important as its transcription activity in circadian control. Acetylates metabolic enzymes IMPDH2 and NDUFA9 in a circadian manner. Facilitated by BMAL1, rhythmically interacts and acetylates argininosuccinate synthase 1 (ASS1) leading to enzymatic inhibition of ASS1 as well as the circadian oscillation of arginine biosynthesis and subsequent ureagenesis. Drives the circadian rhythm of blood pressure through transcriptional activation of ATP1B1. The protein is Circadian locomoter output cycles protein kaput (Clock) of Mus musculus (Mouse).